The chain runs to 329 residues: Beta-ketoacyl-[acyl-carrier-protein] synthase III (329 aa).

Residues Cys-113 and His-255 contribute to the active site. Residues 256-260 (QANQR) are ACP-binding. Asn-285 is an active-site residue.

Belongs to the thiolase-like superfamily. FabH family. In terms of assembly, homodimer.

It is found in the cytoplasm. It catalyses the reaction malonyl-[ACP] + acetyl-CoA + H(+) = 3-oxobutanoyl-[ACP] + CO2 + CoA. Its pathway is lipid metabolism; fatty acid biosynthesis. Functionally, catalyzes the condensation reaction of fatty acid synthesis by the addition to an acyl acceptor of two carbons from malonyl-ACP. Catalyzes the first condensation reaction which initiates fatty acid synthesis and may therefore play a role in governing the total rate of fatty acid production. Possesses both acetoacetyl-ACP synthase and acetyl transacylase activities. Its substrate specificity determines the biosynthesis of branched-chain and/or straight-chain of fatty acids. In Chlorobaculum tepidum (strain ATCC 49652 / DSM 12025 / NBRC 103806 / TLS) (Chlorobium tepidum), this protein is Beta-ketoacyl-[acyl-carrier-protein] synthase III.